The chain runs to 270 residues: Phospholipase A and acyltransferase 5 (270 aa).

2 disordered regions span residues 1-54 (MGLS…SASS) and 70-122 (RRLE…NPRP). 2 stretches are compositionally biased toward polar residues: residues 24–54 (TQIS…SASS) and 100–116 (IPTS…NQAV). Residues 127-240 (LIEIFRIGYE…LRYGVPRSQQ (114 aa)) form the LRAT domain. Residues H137 and H149 contribute to the active site. C224 functions as the Acyl-thioester intermediate in the catalytic mechanism.

Belongs to the H-rev107 family. As to expression, isoform 4 shows highest expression level in testis.

It localises to the cytoplasm. The protein resides in the cytosol. It catalyses the reaction a 1,2-diacyl-sn-glycero-3-phosphocholine + H2O = a 1-acyl-sn-glycero-3-phosphocholine + a fatty acid + H(+). The enzyme catalyses a 1,2-diacyl-sn-glycero-3-phosphocholine + H2O = a 2-acyl-sn-glycero-3-phosphocholine + a fatty acid + H(+). It carries out the reaction 1-hexadecanoyl-2-(5Z,8Z,11Z,14Z-eicosatetraenoyl)-sn-glycero-3-phosphocholine + 1,2-di-(9Z-octadecenoyl)-sn-glycero-3-phosphoethanolamine = N-(5Z,8Z,11Z,14Z-eicosatetraenoyl)-1,2-di-(9Z-octadecenoyl)-sn-glycero-3-phosphoethanolamine + 1-hexadecanoyl-sn-glycero-3-phosphocholine + H(+). The catalysed reaction is 1,2-di-(9Z-octadecenoyl)-sn-glycero-3-phosphoethanolamine + 1,2-dihexadecanoyl-sn-glycero-3-phosphocholine = N-hexadecanoyl-1,2-di-(9Z-octadecenoyl)-sn-glycero-3-phosphoethanolamine + 1-hexadecanoyl-sn-glycero-3-phosphocholine + H(+). It catalyses the reaction 1,2-di-(9Z-octadecenoyl)-sn-glycero-3-phosphoethanolamine + 1,2-dihexadecanoyl-sn-glycero-3-phosphocholine = N-hexadecanoyl-1,2-di-(9Z-octadecenoyl)-sn-glycero-3-phosphoethanolamine + 2-hexadecanoyl-sn-glycero-3-phosphocholine + H(+). The enzyme catalyses a 1,2-diacyl-sn-glycero-3-phosphoethanolamine + a 1,2-diacyl-sn-glycero-3-phosphocholine = an N-acyl-1,2-diacyl-sn-glycero-3-phosphoethanolamine + a 1-acyl-sn-glycero-3-phosphocholine + H(+). It carries out the reaction a 1,2-diacyl-sn-glycero-3-phosphoethanolamine + a 1,2-diacyl-sn-glycero-3-phosphocholine = an N-acyl-1,2-diacyl-sn-glycero-3-phosphoethanolamine + a 2-acyl-sn-glycero-3-phosphocholine + H(+). The catalysed reaction is 1-hexadecanoyl-2-(9Z-octadecenoyl)-sn-glycero-3-phosphocholine + 1,2-di-(9Z-octadecenoyl)-sn-glycero-3-phosphoethanolamine = N,1,2-tri-(9Z-octadecenoyl)-sn-glycero-3-phosphoethanolamine + 1-hexadecanoyl-sn-glycero-3-phosphocholine + H(+). In terms of biological role, exhibits both phospholipase A1/2 and acyltransferase activities. Shows phospholipase A1 (PLA1) and A2 (PLA2) activity, catalyzing the calcium-independent release of fatty acids from the sn-1 or sn-2 position of glycerophospholipids. Shows N-acyltransferase activity, catalyzing the calcium-independent transfer of a fatty acyl group at the sn-1 position of phosphatidylcholine (PC) and other glycerophospholipids to the primary amine of phosphatidylethanolamine (PE), forming N-acylphosphatidylethanolamine (NAPE), which serves as precursor for N-acylethanolamines (NAEs). The protein is Phospholipase A and acyltransferase 5 of Mus musculus (Mouse).